A 526-amino-acid chain; its full sequence is NAD(P)H-quinone oxidoreductase subunit 2 (526 aa).

14 consecutive transmembrane segments (helical) span residues 16–36 (ILPEGIVVITLLVVLVGDLIL), 43–63 (WTPYAAIVGLLGAIVALYTQW), 80–100 (LSIAFRGIIAISAITTILMSV), 110–130 (LGEFICILLTATLGAMFLSGA), 133–153 (LVMIFISLETLSISSYLLTGY), 168–188 (LLIGAASSAIFLYGISLLYGL), 212–232 (LALVIALVFAIAGISFKISAV), 246–266 (PTPVVAFLSVGSKAAGFALAI), 280–300 (WHFVFTALAILSMVLGNVVAL), 308–328 (LLAYSSIGQAGFVMIGLLANT), 336–356 (IFYLLVYLFMNLGGFTCVILF), 380–400 (LGLSLCLLSLGGIPPLAGFFG), 402–422 (IYLFWAGWQAGLYWLVLLGLI), and 468–488 (VGLILSVLATSLAGILSNPLF).

This sequence belongs to the complex I subunit 2 family. As to quaternary structure, NDH-1 can be composed of about 15 different subunits; different subcomplexes with different compositions have been identified which probably have different functions.

It localises to the cellular thylakoid membrane. It carries out the reaction a plastoquinone + NADH + (n+1) H(+)(in) = a plastoquinol + NAD(+) + n H(+)(out). The enzyme catalyses a plastoquinone + NADPH + (n+1) H(+)(in) = a plastoquinol + NADP(+) + n H(+)(out). In terms of biological role, NDH-1 shuttles electrons from an unknown electron donor, via FMN and iron-sulfur (Fe-S) centers, to quinones in the respiratory and/or the photosynthetic chain. The immediate electron acceptor for the enzyme in this species is believed to be plastoquinone. Couples the redox reaction to proton translocation, and thus conserves the redox energy in a proton gradient. Cyanobacterial NDH-1 also plays a role in inorganic carbon-concentration. This is NAD(P)H-quinone oxidoreductase subunit 2 from Trichodesmium erythraeum (strain IMS101).